Here is a 32-residue protein sequence, read N- to C-terminus: Conotoxin pr6b (32 aa).

4-hydroxyproline occurs at positions 6, 13, 20, and 29. 3 disulfides stabilise this stretch: Cys7–Cys18, Cys14–Cys23, and Cys17–Cys31.

In terms of tissue distribution, expressed by the venom duct.

It localises to the secreted. Its function is as follows. Intraperitoneal injection into fish (0.5 nmol) provokes vertical suspension and paralysis after 6 minutes. The polypeptide is Conotoxin pr6b (Conus parius (Cone snail)).